Reading from the N-terminus, the 156-residue chain is 6,7-dimethyl-8-ribityllumazine synthase (156 aa).

5-amino-6-(D-ribitylamino)uracil contacts are provided by residues Phe22, 56 to 58 (AFE), and 80 to 82 (AVI). 85–86 (ST) provides a ligand contact to (2S)-2-hydroxy-3-oxobutyl phosphate. His88 functions as the Proton donor in the catalytic mechanism. 5-amino-6-(D-ribitylamino)uracil is bound at residue Phe113. A (2S)-2-hydroxy-3-oxobutyl phosphate-binding site is contributed by Arg127.

It belongs to the DMRL synthase family.

The catalysed reaction is (2S)-2-hydroxy-3-oxobutyl phosphate + 5-amino-6-(D-ribitylamino)uracil = 6,7-dimethyl-8-(1-D-ribityl)lumazine + phosphate + 2 H2O + H(+). It functions in the pathway cofactor biosynthesis; riboflavin biosynthesis; riboflavin from 2-hydroxy-3-oxobutyl phosphate and 5-amino-6-(D-ribitylamino)uracil: step 1/2. In terms of biological role, catalyzes the formation of 6,7-dimethyl-8-ribityllumazine by condensation of 5-amino-6-(D-ribitylamino)uracil with 3,4-dihydroxy-2-butanone 4-phosphate. This is the penultimate step in the biosynthesis of riboflavin. This Caldicellulosiruptor saccharolyticus (strain ATCC 43494 / DSM 8903 / Tp8T 6331) protein is 6,7-dimethyl-8-ribityllumazine synthase.